A 44-amino-acid chain; its full sequence is Photosystem II reaction center protein J (44 aa).

A helical membrane pass occupies residues 12-32 (IPLWIVGFVVGSLALGLLGIL).

This sequence belongs to the PsbJ family. As to quaternary structure, PSII is composed of 1 copy each of membrane proteins PsbA, PsbB, PsbC, PsbD, PsbE, PsbF, PsbH, PsbI, PsbJ, PsbK, PsbL, PsbM, PsbT, PsbY, PsbZ, Psb30/Ycf12, at least 3 peripheral proteins of the oxygen-evolving complex and a large number of cofactors. It forms dimeric complexes.

Its subcellular location is the plastid. The protein localises to the chloroplast thylakoid membrane. Functionally, one of the components of the core complex of photosystem II (PSII). PSII is a light-driven water:plastoquinone oxidoreductase that uses light energy to abstract electrons from H(2)O, generating O(2) and a proton gradient subsequently used for ATP formation. It consists of a core antenna complex that captures photons, and an electron transfer chain that converts photonic excitation into a charge separation. The polypeptide is Photosystem II reaction center protein J (Bigelowiella natans (Pedinomonas minutissima)).